The chain runs to 392 residues: Galactokinase (392 aa).

Residue 37 to 40 (EHTD) coordinates substrate. Residues serine 71 and 128 to 134 (GSGLSSS) each bind ATP. Residues serine 134 and glutamate 166 each contribute to the Mg(2+) site. Aspartate 178 acts as the Proton acceptor in catalysis. Residue tyrosine 228 coordinates substrate.

The protein belongs to the GHMP kinase family. GalK subfamily.

It is found in the cytoplasm. The enzyme catalyses alpha-D-galactose + ATP = alpha-D-galactose 1-phosphate + ADP + H(+). It participates in carbohydrate metabolism; galactose metabolism. Its function is as follows. Catalyzes the transfer of the gamma-phosphate of ATP to D-galactose to form alpha-D-galactose-1-phosphate (Gal-1-P). The protein is Galactokinase of Streptococcus pneumoniae (strain ATCC BAA-255 / R6).